The chain runs to 382 residues: MSDPIIIIGSGFAAYQLVKSVRRLDAHIPIQIFTADDGAEYNKPDLSHVFSKRQTAADLVVKSGEAFAEEYNVQLHAHTQVERVLTQQQQVVANGRCYPYSKLVFATGAQAFVPPMRGDGLAKVMTLNSLQEYQAAEQPLSRAQHVLVIGGGLIGVEIALDLATSGKQVTVVEPNARLLANLLPEFIALPLEQQLMKHGIQLALNSRVESVTEQGQTLAIALHDGREFAVDAVLCAAGLKANTAVAREAGLSVERGICVDHQLNTSDPHIYALGDCAQIEGRMLPYLQPIVLSANVLAKQLVGQEARLTLPPMMVKVKTPSYPIQLAGDFSPESHWQVQLSPEGIVAKAQSPLGDFTGFVVTGEYVTQAFPLLRELSQRANG.

This sequence belongs to the FAD-dependent oxidoreductase family. FAD serves as cofactor.

It localises to the cytoplasm. The catalysed reaction is 2 reduced [nitric oxide reductase rubredoxin domain] + NAD(+) + H(+) = 2 oxidized [nitric oxide reductase rubredoxin domain] + NADH. Its pathway is nitrogen metabolism; nitric oxide reduction. Functionally, one of at least two accessory proteins for anaerobic nitric oxide (NO) reductase. Reduces the rubredoxin moiety of NO reductase. This chain is Nitric oxide reductase FlRd-NAD(+) reductase, found in Vibrio vulnificus (strain CMCP6).